Consider the following 96-residue polypeptide: Putative defensin-like protein 263 (96 aa).

The first 26 residues, 1–26 (MEKTSLKLVFLFSLTVIALCLSLSAA), serve as a signal peptide directing secretion. 4 disulfide bridges follow: Cys-48/Cys-96, Cys-67/Cys-86, Cys-73/Cys-91, and Cys-77/Cys-93.

This sequence belongs to the DEFL family.

The protein resides in the secreted. This is Putative defensin-like protein 263 from Arabidopsis thaliana (Mouse-ear cress).